Here is an 89-residue protein sequence, read N- to C-terminus: UPF0367 protein CYB_2632 (89 aa).

The interval 69 to 89 is disordered; it reads SKSGSASPMGTRPGFLAQLQS.

Belongs to the UPF0367 family.

The chain is UPF0367 protein CYB_2632 from Synechococcus sp. (strain JA-2-3B'a(2-13)) (Cyanobacteria bacterium Yellowstone B-Prime).